The chain runs to 148 residues: Small ribosomal subunit protein eS19 (148 aa).

Belongs to the eukaryotic ribosomal protein eS19 family.

The polypeptide is Small ribosomal subunit protein eS19 (rps19) (Dictyostelium discoideum (Social amoeba)).